The sequence spans 156 residues: Transthyretin-like protein 1 (156 aa).

The signal sequence occupies residues methionine 1–alanine 17. Asparagine 151 carries N-linked (GlcNAc...) asparagine glycosylation.

Belongs to the nematode transthyretin-like family.

It localises to the secreted. This Caenorhabditis elegans protein is Transthyretin-like protein 1 (ttr-1).